Consider the following 315-residue polypeptide: MILLFYTSSFILDCLLGDPYSWPHPIKAIGNLIKWLTIILRKIFHGKSLYFAGGLLFVLTVGMTGVVSWFILFLSAKIAYWLYVAVFVYLGYTTLAMTCLAKEARKIQRTLADGDLAAARVQVGMIVGRDTDKLTAEEISKATIETVAENTADGVIAPLFYLFIGGPVLALMYKAVNTLDSMVGYKNEKYRAIGFVSAKMDDIANFIPARLAWFFLVIASFILRYDGRASWQIGLRDRKNHTSPNCAYPEGAVAGALGITLGGTHEYFGETVIKPTIGSGNKPVSEKEISQTIHLLYTASTIAFIIFASIYLLLF.

5 consecutive transmembrane segments (helical) span residues 54 to 74 (GLLFVLTVGMTGVVSWFILFL), 78 to 98 (IAYWLYVAVFVYLGYTTLAMT), 152 to 172 (ADGVIAPLFYLFIGGPVLALM), 203 to 223 (IANFIPARLAWFFLVIASFIL), and 295 to 315 (LLYTASTIAFIIFASIYLLLF).

It belongs to the CobD/CbiB family.

Its subcellular location is the cell membrane. The protein operates within cofactor biosynthesis; adenosylcobalamin biosynthesis. Converts cobyric acid to cobinamide by the addition of aminopropanol on the F carboxylic group. This Listeria monocytogenes serotype 4b (strain F2365) protein is Cobalamin biosynthesis protein CobD.